The primary structure comprises 61 residues: Small ribosomal subunit protein uS14 (61 aa).

Zn(2+)-binding residues include Cys24, Cys27, Cys40, and Cys43.

The protein belongs to the universal ribosomal protein uS14 family. Zinc-binding uS14 subfamily. In terms of assembly, part of the 30S ribosomal subunit. Contacts proteins S3 and S10. It depends on Zn(2+) as a cofactor.

Functionally, binds 16S rRNA, required for the assembly of 30S particles and may also be responsible for determining the conformation of the 16S rRNA at the A site. The sequence is that of Small ribosomal subunit protein uS14 from Thermus thermophilus (strain ATCC BAA-163 / DSM 7039 / HB27).